Here is a 483-residue protein sequence, read N- to C-terminus: Betaine aldehyde dehydrogenase (483 aa).

Positions 27 and 93 each coordinate K(+). An NAD(+)-binding site is contributed by 149–151 (GAW). Lys161 acts as the Charge relay system in catalysis. 175–178 (KPSE) contributes to the NAD(+) binding site. Val179 contacts K(+). 228–231 (SVPT) serves as a coordination point for NAD(+). Val243 provides a ligand contact to K(+). The active-site Proton acceptor is Glu249. NAD(+) contacts are provided by Gly251, Cys283, and Glu380. Cys283 acts as the Nucleophile in catalysis. Position 283 is a cysteine sulfenic acid (-SOH) (Cys283). K(+)-binding residues include Lys450 and Gly453. Glu457 acts as the Charge relay system in catalysis.

The protein belongs to the aldehyde dehydrogenase family. Dimer of dimers. K(+) is required as a cofactor.

It carries out the reaction betaine aldehyde + NAD(+) + H2O = glycine betaine + NADH + 2 H(+). It participates in amine and polyamine biosynthesis; betaine biosynthesis via choline pathway; betaine from betaine aldehyde: step 1/1. Involved in the biosynthesis of the osmoprotectant glycine betaine. Catalyzes the irreversible oxidation of betaine aldehyde to the corresponding acid. The polypeptide is Betaine aldehyde dehydrogenase (Cereibacter sphaeroides (strain ATCC 17025 / ATH 2.4.3) (Rhodobacter sphaeroides)).